Consider the following 138-residue polypeptide: Large ribosomal subunit protein uL16 (138 aa).

Positions 1-16 (MLIPRRVKHRKQHHPG) are enriched in basic residues. Residues 1 to 24 (MLIPRRVKHRKQHHPGRSGAATGG) are disordered.

Belongs to the universal ribosomal protein uL16 family. Part of the 50S ribosomal subunit.

In terms of biological role, binds 23S rRNA and is also seen to make contacts with the A and possibly P site tRNAs. The protein is Large ribosomal subunit protein uL16 of Arthrobacter sp. (strain FB24).